Here is a 146-residue protein sequence, read N- to C-terminus: MADPARAARLAQRIKVIVAEALRKQVKQPGVENITITETRVTNDLQHATIYYTIFGGTEARQEAEDSLAKSKGILRREVGKNLTIRLTPTLEFISDEVPETASHVEELIRLAKERDAELAARAARAEFAGEADPYKKPEDDEAAES.

The interval 127–146 (EFAGEADPYKKPEDDEAAES) is disordered.

The protein belongs to the RbfA family. In terms of assembly, monomer. Binds 30S ribosomal subunits, but not 50S ribosomal subunits or 70S ribosomes.

It localises to the cytoplasm. One of several proteins that assist in the late maturation steps of the functional core of the 30S ribosomal subunit. Associates with free 30S ribosomal subunits (but not with 30S subunits that are part of 70S ribosomes or polysomes). Required for efficient processing of 16S rRNA. May interact with the 5'-terminal helix region of 16S rRNA. In Renibacterium salmoninarum (strain ATCC 33209 / DSM 20767 / JCM 11484 / NBRC 15589 / NCIMB 2235), this protein is Ribosome-binding factor A.